A 152-amino-acid polypeptide reads, in one-letter code: Deoxyuridine 5'-triphosphate nucleotidohydrolase (152 aa).

Residues 71 to 73 (RSG), asparagine 84, 88 to 90 (LID), and methionine 98 each bind substrate.

This sequence belongs to the dUTPase family. Requires Mg(2+) as cofactor.

It carries out the reaction dUTP + H2O = dUMP + diphosphate + H(+). The protein operates within pyrimidine metabolism; dUMP biosynthesis; dUMP from dCTP (dUTP route): step 2/2. This enzyme is involved in nucleotide metabolism: it produces dUMP, the immediate precursor of thymidine nucleotides and it decreases the intracellular concentration of dUTP so that uracil cannot be incorporated into DNA. In Shewanella woodyi (strain ATCC 51908 / MS32), this protein is Deoxyuridine 5'-triphosphate nucleotidohydrolase.